Consider the following 174-residue polypeptide: Secretory-abundant heat soluble protein 68234 (174 aa).

Residues 1 to 19 form the signal peptide; that stretch reads MARFLVALALFGVVAMTAA. Residues 26–57 form an SAHS-c1 region; the sequence is EWSGKPWLGKFVAEVTDKSENWEAFVDALGLP. The segment at 72–100 is SAHS-c2; the sequence is YKQGDHYHHIFALPDKNFEKDIEFTLGQE. The interval 113-162 is SAHS-c3; sequence KYSEDGEKLVADVSIPTKGKTIRSEYEVQGDQLIKTYKTGDIVAKKWFKK.

It belongs to the Secretory-abundant heat soluble protein (SAHS) family.

Its subcellular location is the secreted. Its function is as follows. Secreted heat soluble protein acting as a molecular shield in water-deficient condition. Tardigrade-specific intrinsically disordered proteins (TDPs) are essential for desiccation tolerance by forming non-crystalline amorphous solids upon desiccation, and this vitrified state mirrors their protective capabilities. The sequence is that of Secretory-abundant heat soluble protein 68234 from Hypsibius exemplaris (Freshwater tardigrade).